The following is a 697-amino-acid chain: MAR-binding filament-like protein 1 (697 aa).

Residues 1–41 constitute a chloroplast transit peptide; sequence MATSCFPPFSASSSSLCSSQFTPLLSCPRNTQICRKKRPVM. The transit peptide at 42–79 directs the protein to the thylakoid; that stretch reads ASMHSENQKESNVCNRRSILFVGFSVLPLLNLRARALE. Over 80-106 the chain is Lumenal, thylakoid; the sequence is GLSTDSQAQPQKEETEQTIQGSAGNPF. The interval 81-100 is disordered; the sequence is LSTDSQAQPQKEETEQTIQG. The chain crosses the membrane as a helical span at residues 107–127; the sequence is VSLLNGLGVVGSGVLGSLYAL. Residues 128–697 are Stromal-facing; it reads ARNEKAVSDA…GEKEKVNVQQ (570 aa). Residues 203–671 adopt a coiled-coil conformation; it reads LQNEKKLAED…KGEILRLRSQ (469 aa). The interval 599 to 629 is disordered; the sequence is TSRNSSLEDEREVHRQSVSEQKQISQEAQEN. The span at 604–615 shows a compositional bias: basic and acidic residues; the sequence is SLEDEREVHRQS. Positions 616-627 are enriched in polar residues; sequence VSEQKQISQEAQ.

In terms of assembly, interacts with MAF1. Interacts with PTST2; the interaction is essential for the initiation of starch granules biosynthesis in leaf chloroplasts, for the correct location of the process in the stromal spaces between the thylakoid membranes, and for the association of PTST2 with the thylakoid membranes. In terms of processing, phosphorylated in vitro by human casein kinase II. Predicted to be translocated into the thylakoid by the Tat system.

The protein localises to the plastid. It is found in the chloroplast. The protein resides in the chloroplast thylakoid membrane. Its subcellular location is the chloroplast stroma. It localises to the chloroplast nucleoid. The protein localises to the nucleus. It is found in the nucleus matrix. Required for the initiation of starch granules biosynthesis in leaf chloroplasts. Anchored to the thylakoid membranes with its C-terminus facing into the stroma where it is essential for localizing PTST2 and SS4 to the stromal spaces between the thylakoid membranes in order to begin starch granule formation. Associated with leaf chloroplastic nucleoids in vivo. Binds to various chloroplastic double-stranded DNA fragments without particular sequence specificity in vitro. May function at the interface between nucleoids and thylakoids possibly by anchoring nucleoids to the thylakoid membrane system in mature chloroplasts. Binds nuclear DNA. Interacts with chromatin via matrix attachment regions (MARs). Likely to participate in nuclear architecture by connecting chromatin with the nuclear matrix and potentially with the nuclear envelope. This is MAR-binding filament-like protein 1 from Solanum lycopersicum (Tomato).